A 313-amino-acid polypeptide reads, in one-letter code: PDCD10 and GCKIII kinases-associated protein 1 (313 aa).

The tract at residues 42–95 (KGTQNSEVEVPGSTLHSGSLSKPDSSGSTTGLPCQGSLTQEDSEERPCVEKHGI) is disordered. Over residues 58–69 (SGSLSKPDSSGS) the composition is skewed to low complexity. S60 is subject to Phosphoserine. The segment covering 70-81 (TTGLPCQGSLTQ) has biased composition (polar residues). T104 carries the post-translational modification Phosphothreonine. Phosphoserine is present on residues S107, S237, and S240. The disordered stretch occupies residues 253 to 288 (YFKEEDPTQPTPVADPGNEREDPHTYNGNKEGAVVD).

Interacts with KEAP1; this interaction prevents the ubiquitination of KEAP1 by TRIM25, thus protecting KEAP1 from degradation. Found in association with PDCD10 and members of the STE20 kinases, such as STK24, STK25, and STK26.

Its subcellular location is the cell membrane. Its function is as follows. Acts as a tumor suppressor. Acts as a tumor suppressor for colorectal cancer cell proliferation by targeting KEAP1/USP17/ELK1/CDK6 axis. This chain is PDCD10 and GCKIII kinases-associated protein 1, found in Rattus norvegicus (Rat).